We begin with the raw amino-acid sequence, 194 residues long: ATP-dependent Clp protease proteolytic subunit (194 aa).

Catalysis depends on Ser-98, which acts as the Nucleophile. Residue His-123 is part of the active site.

The protein belongs to the peptidase S14 family. As to quaternary structure, fourteen ClpP subunits assemble into 2 heptameric rings which stack back to back to give a disk-like structure with a central cavity, resembling the structure of eukaryotic proteasomes.

Its subcellular location is the cytoplasm. The enzyme catalyses Hydrolysis of proteins to small peptides in the presence of ATP and magnesium. alpha-casein is the usual test substrate. In the absence of ATP, only oligopeptides shorter than five residues are hydrolyzed (such as succinyl-Leu-Tyr-|-NHMec, and Leu-Tyr-Leu-|-Tyr-Trp, in which cleavage of the -Tyr-|-Leu- and -Tyr-|-Trp bonds also occurs).. Cleaves peptides in various proteins in a process that requires ATP hydrolysis. Has a chymotrypsin-like activity. Plays a major role in the degradation of misfolded proteins. The polypeptide is ATP-dependent Clp protease proteolytic subunit (Ruminiclostridium cellulolyticum (strain ATCC 35319 / DSM 5812 / JCM 6584 / H10) (Clostridium cellulolyticum)).